We begin with the raw amino-acid sequence, 286 residues long: MTATLLDGKATAAEIKDELRVRVKALAERGVTPGLGTVLVGADPGSQAYVNGKHRDCAEVGVASLRRELPTDATQEQVDAVLADLNNDPACHGYIVQLPLPAHLDTQRVLELIDPDKDADGLHPVNLGRLVLGYPGPLPCTPRGIVELLRRHDVALRGARVVVIGRGNTVGRPLGLLLTRRSENATVTLCHTGTLDLTAHTRAADIVIVAAGVPGLLTSDMITPGAVVVDVGITRVIGPDGKGRYTGDVDPGVGEVAGALVPMPGGVGPMTRAMLLTNVVERAERG.

NADP(+) is bound by residues 165–167 (GRG), threonine 192, and isoleucine 233.

This sequence belongs to the tetrahydrofolate dehydrogenase/cyclohydrolase family. In terms of assembly, homodimer.

It carries out the reaction (6R)-5,10-methylene-5,6,7,8-tetrahydrofolate + NADP(+) = (6R)-5,10-methenyltetrahydrofolate + NADPH. The enzyme catalyses (6R)-5,10-methenyltetrahydrofolate + H2O = (6R)-10-formyltetrahydrofolate + H(+). The protein operates within one-carbon metabolism; tetrahydrofolate interconversion. Its function is as follows. Catalyzes the oxidation of 5,10-methylenetetrahydrofolate to 5,10-methenyltetrahydrofolate and then the hydrolysis of 5,10-methenyltetrahydrofolate to 10-formyltetrahydrofolate. The polypeptide is Bifunctional protein FolD 2 (Salinispora tropica (strain ATCC BAA-916 / DSM 44818 / JCM 13857 / NBRC 105044 / CNB-440)).